A 473-amino-acid chain; its full sequence is GDP-fucose protein O-fucosyltransferase 2 (473 aa).

The N-terminal stretch at 1–25 (MKNMIYNLISISLYSLIIILTDIYA) is a signal peptide. GDP-beta-L-fucose is bound by residues 59–63 (GEGFN), 283–285 (HLR), and 379–380 (RF). The Proton acceptor role is filled by glutamate 60.

Belongs to the glycosyltransferase 68 family.

The protein resides in the endoplasmic reticulum. It catalyses the reaction L-seryl-[protein] + GDP-beta-L-fucose = 3-O-(alpha-L-fucosyl)-L-seryl-[protein] + GDP + H(+). It carries out the reaction L-threonyl-[protein] + GDP-beta-L-fucose = 3-O-(alpha-L-fucosyl)-L-threonyl-[protein] + GDP + H(+). It participates in protein modification; protein glycosylation. Functionally, catalyzes the reaction that attaches fucose through an O-glycosidic linkage to a conserved serine or threonine residue in the consensus sequence C1-X-X-S/T-C2 of thrombospondin type I repeats (TSRs) where C1 and C2 are the first and second cysteines of the repeat, respectively. O-fucosylates sporozoite proteins CSP and TRAP. O-fucosylation regulates stability and intracellular trafficking of TRAP but not of CSP. Dispensable for parasite transmission to the mosquito vector and/or infection of the vertebrate host hepatocytes. This chain is GDP-fucose protein O-fucosyltransferase 2, found in Plasmodium berghei (strain Anka).